The following is a 128-amino-acid chain: MDTIANLITSIRNAYIVDKKIVRVTATRTNENIGRILLQEGFIKSIREHKDGQKSFLIFTLKYRKKKEKRITLKRISKPGRKIYSDFPNMPKVLGGMGIAIVSTSRGIMTDREARQKKIGGEILCYVW.

It belongs to the universal ribosomal protein uS8 family. In terms of assembly, part of the 30S ribosomal subunit.

Its subcellular location is the plastid. The protein localises to the chloroplast. In terms of biological role, one of the primary rRNA binding proteins, it binds directly to 16S rRNA central domain where it helps coordinate assembly of the platform of the 30S subunit. In Welwitschia mirabilis (Tree tumbo), this protein is Small ribosomal subunit protein uS8c (rps8).